A 333-amino-acid polypeptide reads, in one-letter code: Ribose-phosphate pyrophosphokinase (333 aa).

Residue 58–60 (DGE) coordinates ATP. The Mg(2+) site is built by H151 and D190. The active site involves K214. Residues R216, D240, and 244–248 (DTAGT) each bind D-ribose 5-phosphate.

The protein belongs to the ribose-phosphate pyrophosphokinase family. Class I subfamily. Homohexamer. Mg(2+) serves as cofactor.

The protein localises to the cytoplasm. It catalyses the reaction D-ribose 5-phosphate + ATP = 5-phospho-alpha-D-ribose 1-diphosphate + AMP + H(+). The protein operates within metabolic intermediate biosynthesis; 5-phospho-alpha-D-ribose 1-diphosphate biosynthesis; 5-phospho-alpha-D-ribose 1-diphosphate from D-ribose 5-phosphate (route I): step 1/1. Involved in the biosynthesis of the central metabolite phospho-alpha-D-ribosyl-1-pyrophosphate (PRPP) via the transfer of pyrophosphoryl group from ATP to 1-hydroxyl of ribose-5-phosphate (Rib-5-P). This Synechocystis sp. (strain ATCC 27184 / PCC 6803 / Kazusa) protein is Ribose-phosphate pyrophosphokinase.